We begin with the raw amino-acid sequence, 140 residues long: 3-hydroxyacyl-[acyl-carrier-protein] dehydratase FabZ (140 aa).

Residue His-47 is part of the active site.

It belongs to the thioester dehydratase family. FabZ subfamily.

Its subcellular location is the cytoplasm. It carries out the reaction a (3R)-hydroxyacyl-[ACP] = a (2E)-enoyl-[ACP] + H2O. In terms of biological role, involved in unsaturated fatty acids biosynthesis. Catalyzes the dehydration of short chain beta-hydroxyacyl-ACPs and long chain saturated and unsaturated beta-hydroxyacyl-ACPs. This chain is 3-hydroxyacyl-[acyl-carrier-protein] dehydratase FabZ, found in Streptococcus mutans serotype c (strain ATCC 700610 / UA159).